A 1237-amino-acid polypeptide reads, in one-letter code: Phosphorylase b kinase regulatory subunit alpha, skeletal muscle isoform (1237 aa).

4 positions are modified to phosphoserine: Ser629, Ser729, Ser735, and Ser758. The segment at 810–840 is calmodulin-binding; that stretch reads LTELYGKVGKIRHWGLIRYISGILRKKVEAL. Ser972 carries the post-translational modification Phosphoserine; by autocatalysis. Ser981 bears the Phosphoserine mark. A phosphoserine; by autocatalysis mark is found at Ser985 and Ser1007. Position 1018 is a phosphoserine; by PKA (Ser1018). A phosphoserine mark is found at Ser1020, Ser1023, and Ser1030. The tract at residues 1021 to 1069 is disordered; it reads TESQPNGGHSLGADLMSPSFLSPGTSVTPSSGSFPGHHTSKDSRQGQWQ. Over residues 1042 to 1056 the composition is skewed to low complexity; the sequence is SPGTSVTPSSGSFPG. A calmodulin-binding region spans residues 1060–1100; that stretch reads SKDSRQGQWQRRRRLDGALNRVPIGFYQKVWKVLQKCHGLS. Ser1127 is modified (phosphoserine). Cys1234 carries S-farnesyl cysteine lipidation.

This sequence belongs to the phosphorylase b kinase regulatory chain family. In terms of assembly, hexadecamer of 4 heterotetramers, each composed of alpha, beta, gamma, and delta subunits. Alpha (PHKA1 or PHKA2) and beta (PHKB) are regulatory subunits, gamma (PHKG1 or PHKG2) is the catalytic subunit, and delta is calmodulin. In terms of processing, phosphorylation of Ser-1018 by PKA stimulates the dephosphorylation of the beta subunit and, thus, reverses the initial stimulation of PHK by the faster beta-subunit phosphorylation by PKA, that occurs in muscle in response to adrenaline. Cys-1234 is farnesylated, but the C-terminal tripeptide is not removed and the cysteine carboxyl is not methylated. In terms of tissue distribution, isoform 1 predominates in muscle, heart, brain and testis. Isoforms 1 and 2 are expressed in similar quantities in the other tissues. Isoform 3 is highly expressed in slow muscle and heart.

It is found in the cell membrane. It functions in the pathway glycan biosynthesis; glycogen metabolism. By phosphorylation of various serine residues and by calcium. Its function is as follows. Phosphorylase b kinase catalyzes the phosphorylation of serine in certain substrates, including troponin I. The alpha chain may bind calmodulin. The polypeptide is Phosphorylase b kinase regulatory subunit alpha, skeletal muscle isoform (PHKA1) (Oryctolagus cuniculus (Rabbit)).